The following is a 380-amino-acid chain: DNA replication and repair protein RecF (380 aa).

30–37 (GNNAQGKS) is a binding site for ATP.

It belongs to the RecF family.

The protein resides in the cytoplasm. Functionally, the RecF protein is involved in DNA metabolism; it is required for DNA replication and normal SOS inducibility. RecF binds preferentially to single-stranded, linear DNA. It also seems to bind ATP. The protein is DNA replication and repair protein RecF of Rippkaea orientalis (strain PCC 8801 / RF-1) (Cyanothece sp. (strain PCC 8801)).